The chain runs to 180 residues: Large ribosomal subunit protein uL5 (180 aa).

This sequence belongs to the universal ribosomal protein uL5 family. As to quaternary structure, part of the 50S ribosomal subunit; part of the 5S rRNA/L5/L18/L25 subcomplex. Contacts the 5S rRNA and the P site tRNA. Forms a bridge to the 30S subunit in the 70S ribosome.

In terms of biological role, this is one of the proteins that bind and probably mediate the attachment of the 5S RNA into the large ribosomal subunit, where it forms part of the central protuberance. In the 70S ribosome it contacts protein S13 of the 30S subunit (bridge B1b), connecting the 2 subunits; this bridge is implicated in subunit movement. Contacts the P site tRNA; the 5S rRNA and some of its associated proteins might help stabilize positioning of ribosome-bound tRNAs. The sequence is that of Large ribosomal subunit protein uL5 from Gloeothece citriformis (strain PCC 7424) (Cyanothece sp. (strain PCC 7424)).